Reading from the N-terminus, the 100-residue chain is Aspartyl/glutamyl-tRNA(Asn/Gln) amidotransferase subunit C (100 aa).

It belongs to the GatC family. As to quaternary structure, heterotrimer of A, B and C subunits.

The catalysed reaction is L-glutamyl-tRNA(Gln) + L-glutamine + ATP + H2O = L-glutaminyl-tRNA(Gln) + L-glutamate + ADP + phosphate + H(+). It carries out the reaction L-aspartyl-tRNA(Asn) + L-glutamine + ATP + H2O = L-asparaginyl-tRNA(Asn) + L-glutamate + ADP + phosphate + 2 H(+). In terms of biological role, allows the formation of correctly charged Asn-tRNA(Asn) or Gln-tRNA(Gln) through the transamidation of misacylated Asp-tRNA(Asn) or Glu-tRNA(Gln) in organisms which lack either or both of asparaginyl-tRNA or glutaminyl-tRNA synthetases. The reaction takes place in the presence of glutamine and ATP through an activated phospho-Asp-tRNA(Asn) or phospho-Glu-tRNA(Gln). The chain is Aspartyl/glutamyl-tRNA(Asn/Gln) amidotransferase subunit C from Rickettsia canadensis (strain McKiel).